The chain runs to 199 residues: Recombination protein RecR (199 aa).

A C4-type zinc finger spans residues 58–73; that stretch reads CSACGNVDTQDPCAIC. Positions 81–176 constitute a Toprim domain; that stretch reads HILCIVEEVG…SVSRLAHGVP (96 aa).

The protein belongs to the RecR family.

Its function is as follows. May play a role in DNA repair. It seems to be involved in an RecBC-independent recombinational process of DNA repair. It may act with RecF and RecO. This chain is Recombination protein RecR, found in Parvibaculum lavamentivorans (strain DS-1 / DSM 13023 / NCIMB 13966).